Reading from the N-terminus, the 308-residue chain is Probable dimethyladenosine transferase (308 aa).

A compositionally biased stretch (basic residues) spans methionine 1–lysine 11. Positions methionine 1–phenylalanine 24 are disordered. The span at alanine 12–phenylalanine 24 shows a compositional bias: polar residues. S-adenosyl-L-methionine contacts are provided by histidine 31, leucine 33, glycine 58, glutamate 79, aspartate 107, and asparagine 122.

It belongs to the class I-like SAM-binding methyltransferase superfamily. rRNA adenine N(6)-methyltransferase family. Part of the small subunit (SSU) processome, composed of more than 70 proteins and the RNA chaperone small nucleolar RNA (snoRNA) U3.

The protein resides in the nucleus. It is found in the nucleolus. It carries out the reaction adenosine(1779)/adenosine(1780) in 18S rRNA + 4 S-adenosyl-L-methionine = N(6)-dimethyladenosine(1779)/N(6)-dimethyladenosine(1780) in 18S rRNA + 4 S-adenosyl-L-homocysteine + 4 H(+). Its function is as follows. Specifically dimethylates two adjacent adenosines in the loop of a conserved hairpin near the 3'-end of 18S rRNA in the 40S particle. Involved in the pre-rRNA processing steps leading to small-subunit rRNA production independently of its RNA-modifying catalytic activity. Part of the small subunit (SSU) processome, first precursor of the small eukaryotic ribosomal subunit. During the assembly of the SSU processome in the nucleolus, many ribosome biogenesis factors, an RNA chaperone and ribosomal proteins associate with the nascent pre-rRNA and work in concert to generate RNA folding, modifications, rearrangements and cleavage as well as targeted degradation of pre-ribosomal RNA by the RNA exosome. This Caenorhabditis elegans protein is Probable dimethyladenosine transferase.